A 311-amino-acid polypeptide reads, in one-letter code: 4-hydroxy-tetrahydrodipicolinate synthase (311 aa).

Residue Thr-49 coordinates pyruvate. Tyr-138 serves as the catalytic Proton donor/acceptor. The active-site Schiff-base intermediate with substrate is Lys-166. Val-207 lines the pyruvate pocket.

Belongs to the DapA family. Homotetramer; dimer of dimers.

Its subcellular location is the cytoplasm. The catalysed reaction is L-aspartate 4-semialdehyde + pyruvate = (2S,4S)-4-hydroxy-2,3,4,5-tetrahydrodipicolinate + H2O + H(+). Its pathway is amino-acid biosynthesis; L-lysine biosynthesis via DAP pathway; (S)-tetrahydrodipicolinate from L-aspartate: step 3/4. Functionally, catalyzes the condensation of (S)-aspartate-beta-semialdehyde [(S)-ASA] and pyruvate to 4-hydroxy-tetrahydrodipicolinate (HTPA). In Lactobacillus helveticus (strain DPC 4571), this protein is 4-hydroxy-tetrahydrodipicolinate synthase.